The primary structure comprises 500 residues: L-arabinose isomerase (500 aa).

4 residues coordinate Mn(2+): glutamate 306, glutamate 333, histidine 350, and histidine 450.

This sequence belongs to the arabinose isomerase family. As to quaternary structure, homohexamer. It depends on Mn(2+) as a cofactor.

The enzyme catalyses beta-L-arabinopyranose = L-ribulose. It functions in the pathway carbohydrate degradation; L-arabinose degradation via L-ribulose; D-xylulose 5-phosphate from L-arabinose (bacterial route): step 1/3. Functionally, catalyzes the conversion of L-arabinose to L-ribulose. In Escherichia coli (strain 55989 / EAEC), this protein is L-arabinose isomerase.